Reading from the N-terminus, the 364-residue chain is GTPase Obg (364 aa).

In terms of domain architecture, Obg spans 1–161 (MRFVDEVTIS…KYLRLELKIL (161 aa)). In terms of domain architecture, OBG-type G spans 162-334 (ADAGIIGLPN…LVDAIWKLQS (173 aa)). GTP contacts are provided by residues 168-175 (GLPNAGKS), 193-197 (FTTLN), 217-220 (DIPG), 287-290 (NKID), and 315-317 (SAE). The Mg(2+) site is built by S175 and T195.

This sequence belongs to the TRAFAC class OBG-HflX-like GTPase superfamily. OBG GTPase family. Monomer. Mg(2+) is required as a cofactor.

Its subcellular location is the cytoplasm. An essential GTPase which binds GTP, GDP and possibly (p)ppGpp with moderate affinity, with high nucleotide exchange rates and a fairly low GTP hydrolysis rate. Plays a role in control of the cell cycle, stress response, ribosome biogenesis and in those bacteria that undergo differentiation, in morphogenesis control. The protein is GTPase Obg of Lawsonia intracellularis (strain PHE/MN1-00).